The chain runs to 455 residues: tRNA modification GTPase MnmE (455 aa).

The (6S)-5-formyl-5,6,7,8-tetrahydrofolate site is built by arginine 24, glutamate 81, and lysine 121. Residues 217 to 378 enclose the TrmE-type G domain; the sequence is GMKVVIAGRP…LREHLKDCMG (162 aa). Asparagine 227 is a K(+) binding site. Residues 227-232, 246-252, 271-274, and 359-361 contribute to the GTP site; these read NAGKSS, TDIAGTT, DTAG, and SAR. Serine 231 is a Mg(2+) binding site. K(+)-binding residues include threonine 246, isoleucine 248, and threonine 251. Threonine 252 is a binding site for Mg(2+). Lysine 455 is a binding site for (6S)-5-formyl-5,6,7,8-tetrahydrofolate.

Belongs to the TRAFAC class TrmE-Era-EngA-EngB-Septin-like GTPase superfamily. TrmE GTPase family. In terms of assembly, homodimer. Heterotetramer of two MnmE and two MnmG subunits. K(+) is required as a cofactor.

It localises to the cytoplasm. In terms of biological role, exhibits a very high intrinsic GTPase hydrolysis rate. Involved in the addition of a carboxymethylaminomethyl (cmnm) group at the wobble position (U34) of certain tRNAs, forming tRNA-cmnm(5)s(2)U34. This is tRNA modification GTPase MnmE from Photobacterium profundum (strain SS9).